The following is a 153-amino-acid chain: Protein ripply2.2 (153 aa).

Residues 58-61 (WRPW) carry the WRPW motif; required for transcriptional repression and interaction with tle4 motif. The segment at 93–128 (HPVRLFWPKSKLLDNTYQEAADLLRNFPVQATISLY) is ripply homology domain. The segment at 127-153 (LYNDSESDTDNEEDSSEEEQDSGFESE) is disordered. The span at 131–153 (SESDTDNEEDSSEEEQDSGFESE) shows a compositional bias: acidic residues.

It belongs to the ripply family. In terms of assembly, interacts with tle4 and tbx6, and mediates interaction between these proteins. In terms of tissue distribution, expressed in the presomitic mesoderm (PSM) in the anterior halves of somitomeres S-I, S-II and S-III.

The protein localises to the nucleus. Its function is as follows. Required during somitogenesis for the formation of somite boundaries. Represses the expression of genes involved in somite segmentation by acting with the corepressor tle4 to down-regulate the transcriptional activity of tbx6. May act by regulating the activity of tle4. Represses transcription of delta2, thy1 and ripply2.2/bowline itself. This Xenopus laevis (African clawed frog) protein is Protein ripply2.2 (ripply2.2).